We begin with the raw amino-acid sequence, 101 residues long: Small ribosomal subunit protein uS14 (101 aa).

Belongs to the universal ribosomal protein uS14 family. In terms of assembly, part of the 30S ribosomal subunit. Contacts proteins S3 and S10.

Binds 16S rRNA, required for the assembly of 30S particles and may also be responsible for determining the conformation of the 16S rRNA at the A site. The polypeptide is Small ribosomal subunit protein uS14 (Pseudomonas putida (strain ATCC 47054 / DSM 6125 / CFBP 8728 / NCIMB 11950 / KT2440)).